The sequence spans 58 residues: Glutathione reductase (58 aa).

Residues Glu5, Thr12, Cys13, and Lys21 each coordinate FAD. Cys13 and Cys18 form a disulfide bridge.

This sequence belongs to the class-I pyridine nucleotide-disulfide oxidoreductase family. Homodimer. It depends on FAD as a cofactor.

Its subcellular location is the cytoplasm. It carries out the reaction 2 glutathione + NADP(+) = glutathione disulfide + NADPH + H(+). Catalyzes the reduction of glutathione disulfide (GSSG) to reduced glutathione (GSH). Constitutes the major mechanism to maintain a high GSH:GSSG ratio in the cytosol. The sequence is that of Glutathione reductase from Spirulina sp.